The primary structure comprises 210 residues: Fimbriae Z protein (210 aa).

One can recognise a Response regulatory domain in the interval serine 5–leucine 121. Aspartate 56 carries the 4-aspartylphosphate modification. An HTH luxR-type domain is found at glycine 143–glutamate 208. The H-T-H motif DNA-binding region spans asparagine 167–alanine 186.

It localises to the cytoplasm. The chain is Fimbriae Z protein (fimZ) from Salmonella typhimurium (strain LT2 / SGSC1412 / ATCC 700720).